A 461-amino-acid chain; its full sequence is MAEVGEIIEGCRLPVLRRNQDNEDEWPLAEILSVKDISGRKLFYVHYIDFNKRLDEWVTHERLDLKKIQFPKKEAKTPTKNGLPGSRPGSPEREVKRKVEVVSPATPVPSETAPASVFPQNGAARRAVAAQPGRKRKSNCLGTDEDSQDSSDGIPSAPRMTGSLVSDRSHDDIVTRMKNIECIELGRHRLKPWYFSPYPQELTTLPVLYLCEFCLKYGRSLKCLQRHLTKCDLRHPPGNEIYRKGTISFFEIDGRKNKSYSQNLCLLAKCFLDHKTLYYDTDPFLFYVMTEYDCKGFHIVGYFSKEKESTEDYNVACILTLPPYQRRGYGKLLIEFSYELSKVEGKTGTPEKPLSDLGLLSYRSYWSQTILEILMGLKSESGERPQITINEISEITSIKKEDVISTLQYLNLINYYKGQYILTLSEDIVDGHERAMLKRLLRIDSKCLHFTPKDWSKRGKW.

A Tudor-knot domain is found at isoleucine 8–leucine 65. An N6-acetyllysine modification is found at lysine 52. The tract at residues phenylalanine 70–arginine 168 is disordered. Phosphoserine is present on residues serine 86 and serine 90. The span at serine 90 to glutamate 100 shows a compositional bias: basic and acidic residues. Residues lysine 96, lysine 98, lysine 135, and lysine 137 each carry the N6-acetyllysine; by autocatalysis modification. Serine 147 carries the phosphoserine modification. The MYST-type HAT domain maps to threonine 175–proline 452. Residues leucine 208–leucine 233 form a C2HC MYST-type zinc finger. Lysine 275 bears the N6-acetyllysine; by autocatalysis mark. Positions alanine 316–tryptophan 461 are interaction with ATF2. Residues isoleucine 318–threonine 320 and glutamine 325–lysine 331 contribute to the acetyl-CoA site. Glutamate 351 acts as the Proton donor/acceptor in catalysis. Serine 355 and serine 364 together coordinate acetyl-CoA. A Glycyl lysine isopeptide (Lys-Gly) (interchain with G-Cter in SUMO1); alternate cross-link involves residue lysine 378. Lysine 378 participates in a covalent cross-link: Glycyl lysine isopeptide (Lys-Gly) (interchain with G-Cter in SUMO2); alternate. Residue lysine 399 forms a Glycyl lysine isopeptide (Lys-Gly) (interchain with G-Cter in SUMO1) linkage.

This sequence belongs to the MYST (SAS/MOZ) family. Component of the NuA4 histone acetyltransferase complex which contains the catalytic subunit KAT5/TIP60 and the subunits EP400, TRRAP/PAF400, BRD8/SMAP, EPC1, DMAP1/DNMAP1, RUVBL1/TIP49, RUVBL2, ING3, actin, ACTL6A/BAF53A, MORF4L1/MRG15, MORF4L2/MRGX, MRGBP, YEATS4/GAS41, VPS72/YL1 and MEAF6. KAT5/TIP60, EPC1, and ING3 together constitute a minimal HAT complex termed Piccolo NuA4. The NuA4 complex interacts with MYC. Interacts with ATM. Interacts with JADE1. Interacts with PLA2G4A/CPLA2, EDNRA and HDAC7. Interacts with the cytoplasmic tail of APP and APBB1/FE65. Interacts with TRIM24 and TRIM68. Forms a complex with SENP6 and UBE2I in response to UV irradiation. Identified in a complex with HINT1. Interacts with ATF2 and CUL3. Interacts with NR1D2 (via N-terminus). Component of a SWR1-like complex. Interacts with FOXP3. Interacts with ZBTB49. Interacts with SRF. Interacts with ATF3; promoting autoacetylation and deubiquitination by USP7. Interacts with EP300/p300; interaction promotes KAT5 autoacetylation. Interacts with PRKDC; interaction is impaired following KAT5 sumoylation. Interacts with GPR50. Phosphorylated on Ser-86 and Ser-90; enhanced during G2/M phase. The phosphorylated form has a higher activity. Phosphorylation at Ser-90 by CDK1 or CDK9 is a prerequisite for phosphorylation at Ser-86 by GSK3. Phosphorylation at Ser-86 by GSK3 (GSK3A or GSK3B) activates acetyltransferase and acyltransferase activities. Phosphorylation at Ser-90 by CDK9 promotes KAT5 recruitment to chromatin. Phosphorylation by VRK1 following DNA damage promotes KAT5 association with chromatin and histone acetyltransferase activity. Post-translationally, autoacetylated. Autoacetylation is required for histone acetyltransferase activity. Autoacetylation at Lys-275 is facilitated by interaction with EP300/p300: it prevents ubiquitination and subsequent degradation by the proteasome and promotes acetylation of target proteins. Deacetylated by HDAC3 and SIRT1. Deacetylation by HDAC3 promotes its ubiquitination and cytoplasmic localization. In terms of processing, sumoylated by UBE2I at Lys-378 and Lys-399, leading to increase of its histone acetyltransferase activity in UV-induced DNA damage response, as well as its translocation to nuclear bodies. Sumoylation with SUMO2 by PIAS4 at Lys-378 promotes repair of DNA double-strand breaks (DSBs) via homologous recombination (HR). Sumoylation by PIAS4 impairs interaction with PRKDC, inhibiting non-homologous end joining (NHEJ)-mediated repair of DSBs, thereby facilitating HR. Desumoylated by SENP3. Ubiquitinated by MDM2, leading to its proteasome-dependent degradation. Ubiquitination is prevented by autoacetylation at Lys-275. Ubiquitinated following deacetylation by HDAC3, leading to cytoplasmic localization. Deubiquitinated by USP7 following interaction with ATF3, promoting its stabilization.

The protein localises to the nucleus. Its subcellular location is the chromosome. It is found in the cytoplasm. It localises to the centromere. The protein resides in the kinetochore. The protein localises to the cytoskeleton. Its subcellular location is the spindle pole. It is found in the nucleolus. It localises to the perinuclear region. It catalyses the reaction L-lysyl-[histone] + acetyl-CoA = N(6)-acetyl-L-lysyl-[histone] + CoA + H(+). The enzyme catalyses L-lysyl-[protein] + acetyl-CoA = N(6)-acetyl-L-lysyl-[protein] + CoA + H(+). The catalysed reaction is (2E)-butenoyl-CoA + L-lysyl-[protein] = N(6)-(2E)-butenoyl-L-lysyl-[protein] + CoA + H(+). It carries out the reaction 2-hydroxyisobutanoyl-CoA + L-lysyl-[protein] = N(6)-(2-hydroxyisobutanoyl)-L-lysyl-[protein] + CoA + H(+). It catalyses the reaction (S)-lactoyl-CoA + L-lysyl-[protein] = N(6)-[(S)-lactoyl]-L-lysyl-[protein] + CoA + H(+). Its activity is regulated as follows. Acyltransferase and acetyltransferase activities are activated by phosphorylation and autoacetylation. Autoacetylation activates the histone acetyltransferase activity. Catalytic subunit of the NuA4 histone acetyltransferase complex, a multiprotein complex involved in transcriptional activation of select genes principally by acetylation of nucleosomal histones H2A and H4. Histone acetylation alters nucleosome-DNA interactions and promotes interaction of the modified histones with other proteins which positively regulate transcription. The NuA4 histone acetyltransferase complex is required for the activation of transcriptional programs associated with proto-oncogene mediated growth induction, tumor suppressor mediated growth arrest and replicative senescence, apoptosis, and DNA repair. The NuA4 complex plays a direct role in repair of DNA double-strand breaks (DSBs) by promoting homologous recombination (HR): the complex inhibits TP53BP1 binding to chromatin via MBTD1, which recognizes and binds histone H4 trimethylated at 'Lys-20' (H4K20me), and KAT5 that catalyzes acetylation of 'Lys-15' of histone H2A (H2AK15ac), thereby blocking the ubiquitination mark required for TP53BP1 localization at DNA breaks. Also involved in DSB repair by mediating acetylation of 'Lys-5' of histone H2AX (H2AXK5ac), promoting NBN/NBS1 assembly at the sites of DNA damage. The NuA4 complex plays a key role in hematopoietic stem cell maintenance and is required to maintain acetylated H2A.Z/H2AZ1 at MYC target genes. The NuA4 complex is also required for spermatid development by promoting acetylation of histones: histone hyperacetylation is required for histone replacement during the transition from round to elongating spermatids. Component of a SWR1-like complex that specifically mediates the removal of histone H2A.Z/H2AZ1 from the nucleosome. Also acetylates non-histone proteins, such as BMAL1, ATM, AURKB, CHKA, CGAS, ERCC4/XPF, LPIN1, TP53/p53, NDC80/HEC1, NR1D2, RAN, SOX4, FOXP3, SQSTM1, ULK1 and RUBCNL/Pacer. Directly acetylates and activates ATM. Promotes nucleotide excision repair (NER) by mediating acetylation of ERCC4/XPF, thereby promoting formation of the ERCC4-ERCC1 complex. Relieves NR1D2-mediated inhibition of APOC3 expression by acetylating NR1D2. Acts as a regulator of regulatory T-cells (Treg) by catalyzing FOXP3 acetylation, thereby promoting FOXP3 transcriptional repressor activity. Involved in skeletal myoblast differentiation by mediating acetylation of SOX4. Catalyzes acetylation of APBB1/FE65, increasing its transcription activator activity. Promotes transcription elongation during the activation phase of the circadian cycle by catalyzing acetylation of BMAL1, promoting elongation of circadian transcripts. Together with GSK3 (GSK3A or GSK3B), acts as a regulator of autophagy: phosphorylated at Ser-86 by GSK3 under starvation conditions, leading to activate acetyltransferase activity and promote acetylation of key autophagy regulators, such as ULK1 and RUBCNL/Pacer. Acts as a regulator of the cGAS-STING innate antiviral response by catalyzing acetylation the N-terminus of CGAS, thereby promoting CGAS DNA-binding and activation. Also regulates lipid metabolism by mediating acetylation of CHKA or LPIN1. Promotes lipolysis of lipid droplets following glucose deprivation by mediating acetylation of isoform 1 of CHKA, thereby promoting monomerization of CHKA and its conversion into a tyrosine-protein kinase. Acts as a regulator of fatty-acid-induced triacylglycerol synthesis by catalyzing acetylation of LPIN1, thereby promoting the synthesis of diacylglycerol. In addition to protein acetyltransferase, can use different acyl-CoA substrates, such as (2E)-butenoyl-CoA (crotonyl-CoA), S-lactoyl-CoA (lactyl-CoA) and 2-hydroxyisobutanoyl-CoA (2-hydroxyisobutyryl-CoA), and is able to mediate protein crotonylation, lactylation and 2-hydroxyisobutyrylation, respectively. Acts as a key regulator of chromosome segregation and kinetochore-microtubule attachment during mitosis by mediating acetylation or crotonylation of target proteins. Catalyzes acetylation of AURKB at kinetochores, increasing AURKB activity and promoting accurate chromosome segregation in mitosis. Acetylates RAN during mitosis, promoting microtubule assembly at mitotic chromosomes. Acetylates NDC80/HEC1 during mitosis, promoting robust kinetochore-microtubule attachment. Catalyzes crotonylation of MAPRE1/EB1, thereby ensuring accurate spindle positioning in mitosis. Catalyzes lactylation of NBN/NBS1 in response to DNA damage, thereby promoting DNA double-strand breaks (DSBs) via homologous recombination (HR). The polypeptide is Histone acetyltransferase KAT5 (Pongo abelii (Sumatran orangutan)).